The primary structure comprises 510 residues: 2,3-bisphosphoglycerate-independent phosphoglycerate mutase (510 aa).

Mn(2+) contacts are provided by aspartate 12 and serine 62. Residue serine 62 is the Phosphoserine intermediate of the active site. Substrate contacts are provided by residues histidine 123, 153 to 154 (RD), arginine 185, arginine 191, 261 to 264 (RPDR), and lysine 336. Aspartate 403, histidine 407, aspartate 444, histidine 445, and histidine 462 together coordinate Mn(2+).

It belongs to the BPG-independent phosphoglycerate mutase family. In terms of assembly, monomer. The cofactor is Mn(2+).

It carries out the reaction (2R)-2-phosphoglycerate = (2R)-3-phosphoglycerate. Its pathway is carbohydrate degradation; glycolysis; pyruvate from D-glyceraldehyde 3-phosphate: step 3/5. Its function is as follows. Essential for rapid growth and for sporulation. Catalyzes the interconversion of 2-phosphoglycerate and 3-phosphoglycerate. In Priestia megaterium (strain DSM 319 / IMG 1521) (Bacillus megaterium), this protein is 2,3-bisphosphoglycerate-independent phosphoglycerate mutase.